The chain runs to 101 residues: NADH-quinone oxidoreductase subunit K (101 aa).

Helical transmembrane passes span 4-24, 30-50, and 65-85; these read LEHYLTVSAALLVIGIFGIFL, IVILMSIELMLLAVNINLVAF, and FVLTVAAAEAAIGLAILVTFF.

It belongs to the complex I subunit 4L family. NDH-1 is composed of 14 different subunits. Subunits NuoA, H, J, K, L, M, N constitute the membrane sector of the complex.

Its subcellular location is the cell inner membrane. It carries out the reaction a quinone + NADH + 5 H(+)(in) = a quinol + NAD(+) + 4 H(+)(out). NDH-1 shuttles electrons from NADH, via FMN and iron-sulfur (Fe-S) centers, to quinones in the respiratory chain. The immediate electron acceptor for the enzyme in this species is believed to be ubiquinone. Couples the redox reaction to proton translocation (for every two electrons transferred, four hydrogen ions are translocated across the cytoplasmic membrane), and thus conserves the redox energy in a proton gradient. The chain is NADH-quinone oxidoreductase subunit K from Cereibacter sphaeroides (strain ATCC 17029 / ATH 2.4.9) (Rhodobacter sphaeroides).